The primary structure comprises 394 residues: Protein TsgA homolog (394 aa).

Helical transmembrane passes span W11–M31, F51–P71, L76–L96, L101–I121, L134–M154, W162–F182, I206–I226, F251–L271, I274–N294, I302–L322, F334–V354, and L363–V383.

This sequence belongs to the major facilitator superfamily. TsgA family.

Its subcellular location is the cell inner membrane. The sequence is that of Protein TsgA homolog from Serratia proteamaculans (strain 568).